The chain runs to 215 residues: Pyrrolidone-carboxylate peptidase (215 aa).

Active-site residues include glutamate 80, cysteine 143, and histidine 167.

It belongs to the peptidase C15 family. In terms of assembly, homotetramer.

It is found in the cytoplasm. The enzyme catalyses Release of an N-terminal pyroglutamyl group from a polypeptide, the second amino acid generally not being Pro.. Functionally, removes 5-oxoproline from various penultimate amino acid residues except L-proline. This is Pyrrolidone-carboxylate peptidase from Bacillus cereus (strain ATCC 14579 / DSM 31 / CCUG 7414 / JCM 2152 / NBRC 15305 / NCIMB 9373 / NCTC 2599 / NRRL B-3711).